The sequence spans 407 residues: Probable tRNA sulfurtransferase (407 aa).

The 105-residue stretch at 61–165 (NEITYRLSKI…LDAIYMYEEV (105 aa)) folds into the THUMP domain. ATP-binding positions include 183-184 (ML), 208-209 (HF), Arg265, Gly287, and Gln296.

It belongs to the ThiI family.

Its subcellular location is the cytoplasm. It carries out the reaction [ThiI sulfur-carrier protein]-S-sulfanyl-L-cysteine + a uridine in tRNA + 2 reduced [2Fe-2S]-[ferredoxin] + ATP + H(+) = [ThiI sulfur-carrier protein]-L-cysteine + a 4-thiouridine in tRNA + 2 oxidized [2Fe-2S]-[ferredoxin] + AMP + diphosphate. The catalysed reaction is [ThiS sulfur-carrier protein]-C-terminal Gly-Gly-AMP + S-sulfanyl-L-cysteinyl-[cysteine desulfurase] + AH2 = [ThiS sulfur-carrier protein]-C-terminal-Gly-aminoethanethioate + L-cysteinyl-[cysteine desulfurase] + A + AMP + 2 H(+). Its pathway is cofactor biosynthesis; thiamine diphosphate biosynthesis. Functionally, catalyzes the ATP-dependent transfer of a sulfur to tRNA to produce 4-thiouridine in position 8 of tRNAs, which functions as a near-UV photosensor. Also catalyzes the transfer of sulfur to the sulfur carrier protein ThiS, forming ThiS-thiocarboxylate. This is a step in the synthesis of thiazole, in the thiamine biosynthesis pathway. The sulfur is donated as persulfide by IscS. This chain is Probable tRNA sulfurtransferase, found in Staphylococcus aureus (strain JH1).